The primary structure comprises 216 residues: uncharacterized protein (216 aa).

The next 6 helical transmembrane spans lie at 12–32, 48–68, 74–94, 134–154, 156–176, and 191–211; these read YVLG…FVLA, GVFL…ASLL, LFIG…VGML, ILFF…YPGL, FLVL…FLIF, and LAAG…VKLA.

It belongs to the Rht family.

It is found in the cell membrane. This is an uncharacterized protein from Pseudomonas aeruginosa (strain ATCC 15692 / DSM 22644 / CIP 104116 / JCM 14847 / LMG 12228 / 1C / PRS 101 / PAO1).